Here is a 218-residue protein sequence, read N- to C-terminus: Ras-related protein RABA1i (218 aa).

Residue 20-27 (GDSGVGKS) participates in GTP binding. The Effector region motif lies at 42 to 50 (SRATIGVEF). Residues 68–72 (DTAGQ), 126–129 (NKAD), and 156–157 (SA) each bind GTP. S-geranylgeranyl cysteine attachment occurs at residues Cys215 and Cys216.

The protein belongs to the small GTPase superfamily. Rab family.

Its subcellular location is the cell membrane. Intracellular vesicle trafficking and protein transport. The protein is Ras-related protein RABA1i (RABA1I) of Arabidopsis thaliana (Mouse-ear cress).